Consider the following 305-residue polypeptide: Coiled-coil domain-containing protein 83 (305 aa).

The interval Met1–Ser25 is disordered. Residues Ser8 to Lys21 are compositionally biased toward basic and acidic residues. Positions Glu37 to Arg186 form a coiled coil.

This is Coiled-coil domain-containing protein 83 (Ccdc83) from Mus musculus (Mouse).